Reading from the N-terminus, the 80-residue chain is Exodeoxyribonuclease 7 small subunit (80 aa).

Belongs to the XseB family. As to quaternary structure, heterooligomer composed of large and small subunits.

Its subcellular location is the cytoplasm. The enzyme catalyses Exonucleolytic cleavage in either 5'- to 3'- or 3'- to 5'-direction to yield nucleoside 5'-phosphates.. In terms of biological role, bidirectionally degrades single-stranded DNA into large acid-insoluble oligonucleotides, which are then degraded further into small acid-soluble oligonucleotides. This chain is Exodeoxyribonuclease 7 small subunit, found in Erwinia tasmaniensis (strain DSM 17950 / CFBP 7177 / CIP 109463 / NCPPB 4357 / Et1/99).